The following is a 258-amino-acid chain: Archaerhodopsin-3 (258 aa).

A propeptide spanning residues 1–6 (MDPIAL) is cleaved from the precursor. Gln-7 bears the Pyrrolidone carboxylic acid mark. Over 7-18 (QAGYDLLGDGRP) the chain is Extracellular. Residues 19-40 (ETLWLGIGTLLMLIGTFYFLVR) traverse the membrane as a helical segment. At 41-49 (GWGVTDKDA) the chain is on the cytoplasmic side. Residues 50–71 (REYYAVTILVPGIASAAYLSMF) traverse the membrane as a helical segment. Topologically, residues 72 to 89 (FGIGLTEVTVGGEMLDIY) are extracellular. The chain crosses the membrane as a helical span at residues 90-111 (YARYADWLFTTPLLLLDLALLA). Residues 112-114 (KVD) lie on the Cytoplasmic side of the membrane. Residues 115 to 137 (RVTIGTLVGVDALMIVTGLIGAL) traverse the membrane as a helical segment. The Extracellular segment spans residues 138–141 (SHTA). The helical transmembrane segment at 142–170 (IARYSWWLFSTICMIVVLYFLATSLRSAA) threads the bilayer. The Cytoplasmic portion of the chain corresponds to 171 to 173 (KER). The helical transmembrane segment at 174-202 (GPEVASTFNTLTALVLVLWTAYPILWIIG) threads the bilayer. The Extracellular segment spans residues 203–210 (TEGAGVVG). The chain crosses the membrane as a helical span at residues 211 to 243 (LGIETLLFMVLDVTAKVGFGFILLRSRAILGDT). Lys-226 carries the post-translational modification N6-(retinylidene)lysine. Topologically, residues 244-258 (EAPEPSAGADVSAAD) are cytoplasmic.

The protein belongs to the archaeal/bacterial/fungal opsin family.

It is found in the cell membrane. In terms of biological role, light-driven proton pump. The sequence is that of Archaerhodopsin-3 (aop3) from Halorubrum sodomense.